The following is a 227-amino-acid chain: uncharacterized protein (227 aa).

This is an uncharacterized protein from Caenorhabditis elegans.